The primary structure comprises 260 residues: Imidazole glycerol phosphate synthase subunit HisF (260 aa).

Active-site residues include Asp-12 and Asp-131.

This sequence belongs to the HisA/HisF family. In terms of assembly, heterodimer of HisH and HisF.

The protein localises to the cytoplasm. It carries out the reaction 5-[(5-phospho-1-deoxy-D-ribulos-1-ylimino)methylamino]-1-(5-phospho-beta-D-ribosyl)imidazole-4-carboxamide + L-glutamine = D-erythro-1-(imidazol-4-yl)glycerol 3-phosphate + 5-amino-1-(5-phospho-beta-D-ribosyl)imidazole-4-carboxamide + L-glutamate + H(+). It participates in amino-acid biosynthesis; L-histidine biosynthesis; L-histidine from 5-phospho-alpha-D-ribose 1-diphosphate: step 5/9. Functionally, IGPS catalyzes the conversion of PRFAR and glutamine to IGP, AICAR and glutamate. The HisF subunit catalyzes the cyclization activity that produces IGP and AICAR from PRFAR using the ammonia provided by the HisH subunit. This chain is Imidazole glycerol phosphate synthase subunit HisF, found in Corynebacterium jeikeium (strain K411).